Here is a 207-residue protein sequence, read N- to C-terminus: Large ribosomal subunit protein uL4 (207 aa).

The protein belongs to the universal ribosomal protein uL4 family. In terms of assembly, part of the 50S ribosomal subunit.

Its function is as follows. One of the primary rRNA binding proteins, this protein initially binds near the 5'-end of the 23S rRNA. It is important during the early stages of 50S assembly. It makes multiple contacts with different domains of the 23S rRNA in the assembled 50S subunit and ribosome. In terms of biological role, forms part of the polypeptide exit tunnel. This chain is Large ribosomal subunit protein uL4, found in Rickettsia peacockii (strain Rustic).